Consider the following 143-residue polypeptide: Transcriptional regulator MraZ (143 aa).

2 consecutive SpoVT-AbrB domains span residues 5 to 47 and 76 to 119; these read SHTP…PMAE and AADD…DAQR.

Belongs to the MraZ family. In terms of assembly, forms oligomers.

It localises to the cytoplasm. Its subcellular location is the nucleoid. This chain is Transcriptional regulator MraZ, found in Frankia alni (strain DSM 45986 / CECT 9034 / ACN14a).